Here is a 257-residue protein sequence, read N- to C-terminus: S-methyl-5'-thioadenosine phosphorylase (257 aa).

Residues S10, 50-51, and 83-84 contribute to the phosphate site; these read RH and TA. M180 contacts substrate. T181 contacts phosphate. Residue 204–206 participates in substrate binding; the sequence is DYD.

It belongs to the PNP/MTAP phosphorylase family. MTAP subfamily. As to quaternary structure, homohexamer. Dimer of a homotrimer.

It carries out the reaction S-methyl-5'-thioadenosine + phosphate = 5-(methylsulfanyl)-alpha-D-ribose 1-phosphate + adenine. The catalysed reaction is adenosine + phosphate = alpha-D-ribose 1-phosphate + adenine. Its pathway is amino-acid biosynthesis; L-methionine biosynthesis via salvage pathway; S-methyl-5-thio-alpha-D-ribose 1-phosphate from S-methyl-5'-thioadenosine (phosphorylase route): step 1/1. Catalyzes the reversible phosphorylation of S-methyl-5'-thioadenosine (MTA) to adenine and 5-methylthioribose-1-phosphate. Involved in the breakdown of MTA, a major by-product of polyamine biosynthesis. Responsible for the first step in the methionine salvage pathway after MTA has been generated from S-adenosylmethionine. Has broad substrate specificity with 6-aminopurine nucleosides as preferred substrates. Can also use adenosine as substrate to form ribose 1-phosphate. The polypeptide is S-methyl-5'-thioadenosine phosphorylase (Thermococcus kodakarensis (strain ATCC BAA-918 / JCM 12380 / KOD1) (Pyrococcus kodakaraensis (strain KOD1))).